Reading from the N-terminus, the 446-residue chain is Radical S-adenosyl methionine domain-containing protein 1, mitochondrial (446 aa).

One can recognise a Radical SAM core domain in the interval 15 to 277 (KGYNKLKDLP…VCEAEAMGFQ (263 aa)). 3 residues coordinate [4Fe-4S] cluster: Cys34, Cys38, and Cys41. Residues Gly94, 95–96 (GT), Glu130, Gln159, Arg171, and Asp195 contribute to the S-adenosyl-L-methionine site.

The protein belongs to the anaerobic coproporphyrinogen-III oxidase family. HemW subfamily.

The protein localises to the mitochondrion. Functionally, may be a heme chaperone, appears to bind heme. Homologous bacterial proteins do not have oxygen-independent coproporphyrinogen-III oxidase activity. Binds 1 [4Fe-4S] cluster. The cluster is coordinated with 3 cysteines and an exchangeable S-adenosyl-L-methionine. The chain is Radical S-adenosyl methionine domain-containing protein 1, mitochondrial (rsad1) from Dictyostelium discoideum (Social amoeba).